We begin with the raw amino-acid sequence, 292 residues long: UDP-N-acetylenolpyruvoylglucosamine reductase (292 aa).

Residues 27–188 form the FAD-binding PCMH-type domain; the sequence is KIGGPVRLFI…LRVGFRIIKG (162 aa). Residue R166 is part of the active site. S217 acts as the Proton donor in catalysis. The active site involves E288.

It belongs to the MurB family. Requires FAD as cofactor.

Its subcellular location is the cytoplasm. It catalyses the reaction UDP-N-acetyl-alpha-D-muramate + NADP(+) = UDP-N-acetyl-3-O-(1-carboxyvinyl)-alpha-D-glucosamine + NADPH + H(+). It functions in the pathway cell wall biogenesis; peptidoglycan biosynthesis. In terms of biological role, cell wall formation. In Thermosipho melanesiensis (strain DSM 12029 / CIP 104789 / BI429), this protein is UDP-N-acetylenolpyruvoylglucosamine reductase.